The sequence spans 287 residues: uncharacterized protein (287 aa).

3 disordered regions span residues 109–175, 203–223, and 257–287; these read QEES…SSQD, IPPPTRLISEGPEEPKESQPV, and KESEKSSNETQELSSHSLEEASVHDRISSEE. Positions 110–136 are enriched in low complexity; that stretch reads EESSSSLEEGIIEDPVVATPSPASAAP. Positions 143-152 are enriched in basic and acidic residues; it reads RKEFKNEKWK. Over residues 153 to 162 the composition is skewed to basic residues; sequence EKKKQGRRRN. The span at 273–287 shows a compositional bias: basic and acidic residues; sequence SLEEASVHDRISSEE.

Belongs to the chlamydial CPn_0623/CT_504/TC_0791 family.

This is an uncharacterized protein from Chlamydia muridarum (strain MoPn / Nigg).